The following is a 208-amino-acid chain: Uracil phosphoribosyltransferase (208 aa).

5-phospho-alpha-D-ribose 1-diphosphate contacts are provided by residues arginine 78, arginine 103, and 130–138 (DPMLATGGS). Uracil contacts are provided by residues isoleucine 193 and 198-200 (GDA). Residue aspartate 199 coordinates 5-phospho-alpha-D-ribose 1-diphosphate.

It belongs to the UPRTase family. Mg(2+) is required as a cofactor.

It carries out the reaction UMP + diphosphate = 5-phospho-alpha-D-ribose 1-diphosphate + uracil. It functions in the pathway pyrimidine metabolism; UMP biosynthesis via salvage pathway; UMP from uracil: step 1/1. Allosterically activated by GTP. Catalyzes the conversion of uracil and 5-phospho-alpha-D-ribose 1-diphosphate (PRPP) to UMP and diphosphate. In Enterobacter sp. (strain 638), this protein is Uracil phosphoribosyltransferase.